Reading from the N-terminus, the 458-residue chain is Alpha-1,3/1,6-mannosyltransferase ALG2 (458 aa).

Asn-57 and Asn-169 each carry an N-linked (GlcNAc...) asparagine glycan. A helical transmembrane segment spans residues 438 to 458 (NISIIYVVSIIFAVLLKVFVF).

It belongs to the glycosyltransferase group 1 family.

It is found in the endoplasmic reticulum membrane. It catalyses the reaction a beta-D-Man-(1-&gt;4)-beta-D-GlcNAc-(1-&gt;4)-alpha-D-GlcNAc-diphospho-di-trans,poly-cis-dolichol + GDP-alpha-D-mannose = an alpha-D-Man-(1-&gt;3)-beta-D-Man-(1-&gt;4)-beta-D-GlcNAc-(1-&gt;4)-alpha-D-GlcNAc-diphospho-di-trans,poly-cis-dolichol + GDP + H(+). The catalysed reaction is an alpha-D-Man-(1-&gt;3)-beta-D-Man-(1-&gt;4)-beta-D-GlcNAc-(1-&gt;4)-alpha-D-GlcNAc-diphospho-di-trans,poly-cis-dolichol + GDP-alpha-D-mannose = an alpha-D-Man-(1-&gt;3)-[alpha-D-Man-(1-&gt;6)]-beta-D-Man-(1-&gt;4)-beta-D-GlcNAc-(1-&gt;4)-alpha-D-GlcNAc-diphospho-di-trans,poly-cis-dolichol + GDP + H(+). It functions in the pathway protein modification; protein glycosylation. Mannosylates Man(2)GlcNAc(2)-dolichol diphosphate and Man(1)GlcNAc(2)-dolichol diphosphate to form Man(3)GlcNAc(2)-dolichol diphosphate. This Candida glabrata (strain ATCC 2001 / BCRC 20586 / JCM 3761 / NBRC 0622 / NRRL Y-65 / CBS 138) (Yeast) protein is Alpha-1,3/1,6-mannosyltransferase ALG2 (ALG2).